A 341-amino-acid chain; its full sequence is S-adenosylmethionine:tRNA ribosyltransferase-isomerase (341 aa).

This sequence belongs to the QueA family. Monomer.

The protein resides in the cytoplasm. It carries out the reaction 7-aminomethyl-7-carbaguanosine(34) in tRNA + S-adenosyl-L-methionine = epoxyqueuosine(34) in tRNA + adenine + L-methionine + 2 H(+). Its pathway is tRNA modification; tRNA-queuosine biosynthesis. Transfers and isomerizes the ribose moiety from AdoMet to the 7-aminomethyl group of 7-deazaguanine (preQ1-tRNA) to give epoxyqueuosine (oQ-tRNA). This Pelotomaculum thermopropionicum (strain DSM 13744 / JCM 10971 / SI) protein is S-adenosylmethionine:tRNA ribosyltransferase-isomerase.